A 238-amino-acid polypeptide reads, in one-letter code: Large ribosomal subunit protein uL1 (238 aa).

The protein belongs to the universal ribosomal protein uL1 family. Part of the 50S ribosomal subunit.

Functionally, binds directly to 23S rRNA. The L1 stalk is quite mobile in the ribosome, and is involved in E site tRNA release. Its function is as follows. Protein L1 is also a translational repressor protein, it controls the translation of the L11 operon by binding to its mRNA. This Frankia casuarinae (strain DSM 45818 / CECT 9043 / HFP020203 / CcI3) protein is Large ribosomal subunit protein uL1.